The sequence spans 226 residues: Protein AhpA (226 aa).

2 consecutive transmembrane segments (helical) span residues 12-32 and 169-189; these read SMIS…LFGV and GELI…HYFL.

It belongs to the Smp family.

The protein localises to the cell inner membrane. When anaerobically expressed in wild-type E.coli K12 confers a hemolytic phenotype, but not in an sheA mutant. Suggests it affects the expression of the latent E.coli K12 hemolysin sheA under anaerobic conditions. The sequence is that of Protein AhpA (ahpA) from Pasteurella multocida (strain Pm70).